The sequence spans 508 residues: Ribonuclease Y (508 aa).

A helical transmembrane segment spans residues 2–22 (IITALIAIAVGFLIGYLARKI). Positions 198-261 (TVSVVTLPND…EVARIALEKL (64 aa)) constitute a KH domain. The HD domain maps to 324-417 (VLKHSIEVAH…VQAADAISAA (94 aa)).

Belongs to the RNase Y family.

The protein localises to the cell membrane. Endoribonuclease that initiates mRNA decay. In Thermoanaerobacter pseudethanolicus (strain ATCC 33223 / 39E) (Clostridium thermohydrosulfuricum), this protein is Ribonuclease Y.